Consider the following 467-residue polypeptide: Methylenetetrahydrofolate--tRNA-(uracil-5-)-methyltransferase TrmFO (467 aa).

Position 10-15 (10-15) interacts with FAD; it reads GGGMAG.

It belongs to the MnmG family. TrmFO subfamily. FAD is required as a cofactor.

Its subcellular location is the cytoplasm. It carries out the reaction uridine(54) in tRNA + (6R)-5,10-methylene-5,6,7,8-tetrahydrofolate + NADH + H(+) = 5-methyluridine(54) in tRNA + (6S)-5,6,7,8-tetrahydrofolate + NAD(+). The enzyme catalyses uridine(54) in tRNA + (6R)-5,10-methylene-5,6,7,8-tetrahydrofolate + NADPH + H(+) = 5-methyluridine(54) in tRNA + (6S)-5,6,7,8-tetrahydrofolate + NADP(+). In terms of biological role, catalyzes the folate-dependent formation of 5-methyl-uridine at position 54 (M-5-U54) in all tRNAs. This is Methylenetetrahydrofolate--tRNA-(uracil-5-)-methyltransferase TrmFO from Hyphomonas neptunium (strain ATCC 15444).